A 394-amino-acid chain; its full sequence is Proliferation-associated protein 2G4 (394 aa).

An N-acetylserine modification is found at Ser-2. A Phosphoserine modification is found at Ser-2. The necessary for nucleolar localization stretch occupies residues 2-48; that stretch reads SGEDEQQEQTIAEDLVVTKYKMGGDIANRVLRSLVEASSSGVSVLSL. Positions 46-54 are RNA-binding; that stretch reads LSLCEKGDA. A Glycyl lysine isopeptide (Lys-Gly) (interchain with G-Cter in SUMO2) cross-link involves residue Lys-298. Positions 301-394 are necessary for nucleolar localization; the sequence is LLQPFNVLYE…ETLEENGAGD (94 aa). Ser-335 carries the post-translational modification Phosphoserine. Residues 358-394 form a disordered region; that stretch reads LQSSASRKTQKKKKKKASKTVENATSGETLEENGAGD. Phosphoserine; by PKC/PRKCD is present on Ser-361. The interaction with RNA stretch occupies residues 361–375; that stretch reads SASRKTQKKKKKKAS. A compositionally biased stretch (basic residues) spans 365-375; the sequence is KTQKKKKKKAS. Thr-366 and Thr-386 each carry phosphothreonine.

This sequence belongs to the peptidase M24 family. As to quaternary structure, isoform 2 interacts with the cytoplasmic domain of non-phosphorylated ERBB3; the interaction requires PKC activity. Interacts with AR. Treatment with HRG leads to dissociation from ERBB3 and increases association with AR. Interacts with nucleolin/NCL. Component of a ribonucleoprotein complex containing at least PA2G4, NCL, TOP1, PABPC2, RPLP0, acetylated histone H1 (HIST1H1A or H1F1), histone H1 2/4, RPL4, RPL8, RPL15, RPL18, RPL18A, RPL21, RPL11, RPL12, RPL28, RPL27, RPLP2 and RPL24. Interacts with HDAC2. Interacts with RB1; the interaction is enhanced upon PA2G4 dephosphorylation. Interacts with AKT1. Isoform 1 and isoform 2 interact with RNF20. Isoform 2 interacts with HUWE1. Interacts with DNAJC21. Post-translationally, phosphorylated on serine and threonine residues. Phosphorylation is enhanced by HRG treatment. Basal phosphorylation is PKC-dependent and HRG-induced phosphorylation is predominantly PKC-independent. Phosphorylation at Ser-361 by PKC/PRKCD regulates its nucleolar localization. Isoform 2 is polyubiquitinated, leading to proteasomal degradation and phosphorylation by PKC/PRKCD enhances polyubiquitination. In terms of tissue distribution, widely expressed.

Its subcellular location is the cytoplasm. The protein localises to the nucleus. The protein resides in the nucleolus. Its function is as follows. May play a role in a ERBB3-regulated signal transduction pathway. Seems be involved in growth regulation. Acts a corepressor of the androgen receptor (AR) and is regulated by the ERBB3 ligand neuregulin-1/heregulin (HRG). Inhibits transcription of some E2F1-regulated promoters, probably by recruiting histone acetylase (HAT) activity. Binds RNA. Associates with 28S, 18S and 5.8S mature rRNAs, several rRNA precursors and probably U3 small nucleolar RNA. May be involved in regulation of intermediate and late steps of rRNA processing. May be involved in ribosome assembly. Mediates cap-independent translation of specific viral IRESs (internal ribosomal entry site). Together with PTBP1 is required for the translation initiation on the foot-and-mouth disease virus (FMDV) IRES. Regulates cell proliferation, differentiation, and survival. Isoform 1 suppresses apoptosis whereas isoform 2 promotes cell differentiation. This chain is Proliferation-associated protein 2G4 (Pa2g4), found in Mus musculus (Mouse).